The following is a 287-amino-acid chain: Bifunctional protein FolD (287 aa).

Residues 166–168 (GAS), Ser191, and Ile232 contribute to the NADP(+) site.

The protein belongs to the tetrahydrofolate dehydrogenase/cyclohydrolase family. As to quaternary structure, homodimer.

The enzyme catalyses (6R)-5,10-methylene-5,6,7,8-tetrahydrofolate + NADP(+) = (6R)-5,10-methenyltetrahydrofolate + NADPH. The catalysed reaction is (6R)-5,10-methenyltetrahydrofolate + H2O = (6R)-10-formyltetrahydrofolate + H(+). Its pathway is one-carbon metabolism; tetrahydrofolate interconversion. Functionally, catalyzes the oxidation of 5,10-methylenetetrahydrofolate to 5,10-methenyltetrahydrofolate and then the hydrolysis of 5,10-methenyltetrahydrofolate to 10-formyltetrahydrofolate. The protein is Bifunctional protein FolD of Haemophilus ducreyi (strain 35000HP / ATCC 700724).